Here is a 244-residue protein sequence, read N- to C-terminus: Lymphotoxin-beta (244 aa).

At 1–18 (MGALGLEGRGGRLQGRGS) the chain is on the cytoplasmic side. Residues 19–48 (LLLAVAGATSLVTLLLAVPITVLAVLALVP) form a helical; Signal-anchor for type II membrane protein membrane-spanning segment. The Extracellular portion of the chain corresponds to 49-244 (QDQGGLVTDT…KTFFGAVMVG (196 aa)). Residues 88-243 (PAAHLIGAPL…GKTFFGAVMV (156 aa)) form the THD domain. A glycan (N-linked (GlcNAc...) asparagine) is linked at Asn-222.

The protein belongs to the tumor necrosis factor family. Heterotrimer of either two LTB and one LTA subunits or (less prevalent) two LTA and one LTB subunits.

It is found in the membrane. Functionally, cytokine that binds to LTBR/TNFRSF3. May play a specific role in immune response regulation. Provides the membrane anchor for the attachment of the heterotrimeric complex to the cell surface. This chain is Lymphotoxin-beta (LTB), found in Macaca mulatta (Rhesus macaque).